The chain runs to 425 residues: Trigger factor (425 aa).

Residues Gly-163 to Pro-248 enclose the PPIase FKBP-type domain.

It belongs to the FKBP-type PPIase family. Tig subfamily.

The protein localises to the cytoplasm. It catalyses the reaction [protein]-peptidylproline (omega=180) = [protein]-peptidylproline (omega=0). In terms of biological role, involved in protein export. Acts as a chaperone by maintaining the newly synthesized protein in an open conformation. Functions as a peptidyl-prolyl cis-trans isomerase. This chain is Trigger factor, found in Bacillus cereus (strain G9842).